The chain runs to 151 residues: MLIWITIGIVWAIDRVLKVLIQGNFVVGESVPVIPDFFHLTYVLNPGAAFGLLPGRTWIFIPAAIIVCAGIIYAQFKIPRQEWLMRLTLGLIGGGALGNLYDRLFIGKVVDYLDFQIWPFVFNFADSAIVVGVGLLMILMLLEDRKERKTE.

Helical transmembrane passes span 33–53 (VIPD…FGLL), 58–78 (WIFI…QFKI), and 87–107 (LTLG…LFIG). Residues D111 and D126 contribute to the active site. Residues 120–140 (FVFNFADSAIVVGVGLLMILM) form a helical membrane-spanning segment.

Belongs to the peptidase A8 family.

It is found in the cell membrane. It carries out the reaction Release of signal peptides from bacterial membrane prolipoproteins. Hydrolyzes -Xaa-Yaa-Zaa-|-(S,diacylglyceryl)Cys-, in which Xaa is hydrophobic (preferably Leu), and Yaa (Ala or Ser) and Zaa (Gly or Ala) have small, neutral side chains.. It functions in the pathway protein modification; lipoprotein biosynthesis (signal peptide cleavage). This protein specifically catalyzes the removal of signal peptides from prolipoproteins. The sequence is that of Lipoprotein signal peptidase from Desulfitobacterium hafniense (strain DSM 10664 / DCB-2).